The following is a 488-amino-acid chain: V-type proton ATPase subunit B 1 (488 aa).

This sequence belongs to the ATPase alpha/beta chains family. V-ATPase is a heteromultimeric enzyme composed of a peripheral catalytic V1 complex (main components: subunits A, B, C, D, E, and F) attached to an integral membrane V0 proton pore complex (main component: the proteolipid protein).

Its function is as follows. Non-catalytic subunit of the peripheral V1 complex of vacuolar ATPase. V-ATPase is responsible for acidifying a variety of intracellular compartments in eukaryotic cells. This is V-type proton ATPase subunit B 1 from Hordeum vulgare (Barley).